The chain runs to 394 residues: Elongation factor Tu 1 (394 aa).

Positions 10–204 constitute a tr-type G domain; sequence KPHVNVGTIG…FLDSYIPEPE (195 aa). The segment at 19–26 is G1; sequence GHVDHGKT. 19–26 is a GTP binding site; the sequence is GHVDHGKT. Threonine 26 is a Mg(2+) binding site. The G2 stretch occupies residues 60–64; sequence GITIN. Residues 81 to 84 are G3; that stretch reads DCPG. GTP contacts are provided by residues 81 to 85 and 136 to 139; these read DCPGH and NKCD. Residues 136 to 139 are G4; sequence NKCD. Residues 174–176 are G5; it reads SAL.

It belongs to the TRAFAC class translation factor GTPase superfamily. Classic translation factor GTPase family. EF-Tu/EF-1A subfamily. Monomer.

Its subcellular location is the cytoplasm. The enzyme catalyses GTP + H2O = GDP + phosphate + H(+). Functionally, GTP hydrolase that promotes the GTP-dependent binding of aminoacyl-tRNA to the A-site of ribosomes during protein biosynthesis. This chain is Elongation factor Tu 1, found in Shigella flexneri serotype 5b (strain 8401).